Consider the following 436-residue polypeptide: Adenylosuccinate synthetase (436 aa).

Residues 12–18 (GDEGKGK) and 40–42 (GHT) each bind GTP. The active-site Proton acceptor is the D13. Residues D13 and G40 each contribute to the Mg(2+) site. IMP-binding positions include 13 to 16 (DEGK), 38 to 41 (NAGH), T128, R142, Q223, T238, and R302. H41 acts as the Proton donor in catalysis. 298–304 (TTTGRRR) contacts substrate. GTP contacts are provided by residues R304, 330 to 332 (KLD), and 412 to 414 (SLG).

It belongs to the adenylosuccinate synthetase family. As to quaternary structure, homodimer. Mg(2+) is required as a cofactor.

It localises to the cytoplasm. The catalysed reaction is IMP + L-aspartate + GTP = N(6)-(1,2-dicarboxyethyl)-AMP + GDP + phosphate + 2 H(+). It functions in the pathway purine metabolism; AMP biosynthesis via de novo pathway; AMP from IMP: step 1/2. In terms of biological role, plays an important role in the de novo pathway of purine nucleotide biosynthesis. Catalyzes the first committed step in the biosynthesis of AMP from IMP. The chain is Adenylosuccinate synthetase from Prochlorococcus marinus (strain AS9601).